The primary structure comprises 488 residues: Ribulose bisphosphate carboxylase large chain (488 aa).

Residues Asn127 and Thr177 each coordinate substrate. The active-site Proton acceptor is the Lys179. Substrate is bound at residue Lys181. Mg(2+) is bound by residues Lys205, Asp207, and Glu208. At Lys205 the chain carries N6-carboxylysine. His297 serves as the catalytic Proton acceptor. 3 residues coordinate substrate: Arg298, His330, and Ser382.

Belongs to the RuBisCO large chain family. Type I subfamily. As to quaternary structure, heterohexadecamer of 8 large chains and 8 small chains. The cofactor is Mg(2+).

It is found in the plastid. The protein resides in the chloroplast. It catalyses the reaction 2 (2R)-3-phosphoglycerate + 2 H(+) = D-ribulose 1,5-bisphosphate + CO2 + H2O. It carries out the reaction D-ribulose 1,5-bisphosphate + O2 = 2-phosphoglycolate + (2R)-3-phosphoglycerate + 2 H(+). Its function is as follows. RuBisCO catalyzes two reactions: the carboxylation of D-ribulose 1,5-bisphosphate, the primary event in carbon dioxide fixation, as well as the oxidative fragmentation of the pentose substrate in the photorespiration process. Both reactions occur simultaneously and in competition at the same active site. This is Ribulose bisphosphate carboxylase large chain from Porphyra purpurea (Red seaweed).